An 81-amino-acid polypeptide reads, in one-letter code: MKKGIHPDYHPVVFQDSATGFKFLSGSTVGSAETIKWEDGNEYPLIRVEITSDSHPFYTGRQKFQQADGTVAKFNKKYGLA.

It belongs to the bacterial ribosomal protein bL31 family. Type B subfamily. As to quaternary structure, part of the 50S ribosomal subunit.

The chain is Large ribosomal subunit protein bL31B from Pediococcus pentosaceus (strain ATCC 25745 / CCUG 21536 / LMG 10740 / 183-1w).